The following is a 288-amino-acid chain: Protein sprouty homolog 3 (288 aa).

One can recognise an SPR domain in the interval 154–260 (KCVPCTAARP…GYDSLRRPGC (107 aa)).

Belongs to the sprouty family. As to quaternary structure, interacts with TESK1. Interacts with USP11. Interacts with CAV1 (via C-terminus). In terms of tissue distribution, widely expressed; particularly in the fetal tissues. Expressed in the brain with expression the highest in Purkinje cells in the cerebellum (at protein level). Expressed in the myocardium of the heart.

It localises to the cytoplasm. Its function is as follows. Inhibits neurite branching, arbor length and neurite complexity. Inhibits EGF-mediated p42/44 ERK signaling. Negatively regulates the MAPK cascade, resulting in a reduction of extracellular matrix protein accumulation. May function as an antagonist of fibroblast growth factor (FGF) pathways and may negatively modulate respiratory organogenesis. This is Protein sprouty homolog 3 from Homo sapiens (Human).